The primary structure comprises 374 residues: Guanine nucleotide-binding protein subunit alpha-15 (374 aa).

Residues 41 to 374 (GELKLLLLGP…ARYLDEINLL (334 aa)) form the G-alpha domain. Positions 44-57 (KLLLLGPGESGKST) are G1 motif. GTP contacts are provided by residues 49-56 (GPGESGKS), 183-189 (LRSRMPT), 208-212 (DVGGQ), 277-280 (NKTD), and alanine 346. Serine 56 contributes to the Mg(2+) binding site. Residues 181 to 189 (DVLRSRMPT) form a G2 motif region. Position 186 is an ADP-ribosylarginine; by cholera toxin (arginine 186). Threonine 189 contributes to the Mg(2+) binding site. Residues 204 to 213 (LRIVDVGGQK) form a G3 motif region. The segment at 273-280 (ILFLNKTD) is G4 motif. A G5 motif region spans residues 344–349 (TCATDT).

It belongs to the G-alpha family. G(q) subfamily. In terms of assembly, g proteins are composed of 3 units; alpha, beta and gamma. The alpha chain contains the guanine nucleotide binding site. In terms of tissue distribution, specifically expressed in hematopoietic cells. Expressed in epididymis (at protein level).

Guanine nucleotide-binding proteins (G proteins) are involved as modulators or transducers in various transmembrane signaling systems. The protein is Guanine nucleotide-binding protein subunit alpha-15 (GNA15) of Homo sapiens (Human).